We begin with the raw amino-acid sequence, 723 residues long: Polyribonucleotide nucleotidyltransferase (723 aa).

Mg(2+) is bound by residues aspartate 487 and aspartate 493. Positions 554-613 (PKILIMHINPDKIREVIGPSGKQINKIIDETGVKIDIEQDGTIFISSVDEAANQKAKQII) constitute a KH domain. In terms of domain architecture, S1 motif spans 623–691 (GQVYLGKVKR…KQGRVNLSRK (69 aa)). Positions 702–723 (GELPRESREKRGRRPERHRMKP) are disordered. Residues 711-723 (KRGRRPERHRMKP) are compositionally biased toward basic residues.

This sequence belongs to the polyribonucleotide nucleotidyltransferase family. Mg(2+) serves as cofactor.

It localises to the cytoplasm. The enzyme catalyses RNA(n+1) + phosphate = RNA(n) + a ribonucleoside 5'-diphosphate. Involved in mRNA degradation. Catalyzes the phosphorolysis of single-stranded polyribonucleotides processively in the 3'- to 5'-direction. The sequence is that of Polyribonucleotide nucleotidyltransferase from Geobacillus kaustophilus (strain HTA426).